Reading from the N-terminus, the 374-residue chain is Muconate cycloisomerase 1 (374 aa).

Belongs to the cycloisomerase 2 family. In terms of assembly, homotetramer.

It carries out the reaction (S)-muconolactone = cis,cis-muconate + H(+). It functions in the pathway aromatic compound metabolism; beta-ketoadipate pathway; 5-oxo-4,5-dihydro-2-furylacetate from catechol: step 2/3. Catalyzes a syn cycloisomerization. This is Muconate cycloisomerase 1 from Cutaneotrichosporon cutaneum (Yeast).